The primary structure comprises 509 residues: Steroid 17-alpha-hydroxylase/17,20 lyase (509 aa).

A substrate-binding site is contributed by Asn202. Cys442 contacts heme.

Belongs to the cytochrome P450 family. Heme serves as cofactor.

It is found in the endoplasmic reticulum membrane. The protein resides in the microsome membrane. It carries out the reaction a C21-steroid + reduced [NADPH--hemoprotein reductase] + O2 = a 17alpha-hydroxy-C21-steroid + oxidized [NADPH--hemoprotein reductase] + H2O + H(+). The enzyme catalyses progesterone + reduced [NADPH--hemoprotein reductase] + O2 = 17alpha-hydroxyprogesterone + oxidized [NADPH--hemoprotein reductase] + H2O + H(+). It catalyses the reaction pregnenolone + reduced [NADPH--hemoprotein reductase] + O2 = 17alpha-hydroxypregnenolone + oxidized [NADPH--hemoprotein reductase] + H2O + H(+). The catalysed reaction is 17alpha-hydroxyprogesterone + reduced [NADPH--hemoprotein reductase] + O2 = androst-4-ene-3,17-dione + acetate + oxidized [NADPH--hemoprotein reductase] + H2O + 2 H(+). It carries out the reaction 17alpha-hydroxyprogesterone + reduced [NADPH--hemoprotein reductase] + O2 = 16alpha,17alpha-dihydroxyprogesterone + oxidized [NADPH--hemoprotein reductase] + H2O + H(+). The enzyme catalyses 16alpha,17alpha-dihydroxyprogesterone + reduced [NADPH--hemoprotein reductase] + O2 = 6beta,16alpha,17alpha-trihydroxyprogesterone + oxidized [NADPH--hemoprotein reductase] + H2O + H(+). It catalyses the reaction 17alpha-hydroxypregnenolone + reduced [NADPH--hemoprotein reductase] + O2 = 3beta-hydroxyandrost-5-en-17-one + acetate + oxidized [NADPH--hemoprotein reductase] + H2O + 2 H(+). The catalysed reaction is 16alpha,17alpha-dihydroxypregnenolone + reduced [NADPH--hemoprotein reductase] + O2 = 3beta,16alpha-dihydroxy-androst-5-en-17-one + acetate + oxidized [NADPH--hemoprotein reductase] + H2O + 2 H(+). It carries out the reaction 3beta-hydroxyandrost-5-en-17-one + reduced [NADPH--hemoprotein reductase] + O2 = 3beta,16alpha-dihydroxy-androst-5-en-17-one + oxidized [NADPH--hemoprotein reductase] + H2O + H(+). The enzyme catalyses androst-4-ene-3,17-dione + reduced [NADPH--hemoprotein reductase] + O2 = 16alpha-hydroxyandrost-4-ene-3,17-dione + oxidized [NADPH--hemoprotein reductase] + H2O + H(+). It participates in steroid hormone biosynthesis. It functions in the pathway steroid biosynthesis; glucocorticoid biosynthesis. Its activity is regulated as follows. Regulated predominantly by intracellular cAMP levels. The 17,20-lyase activity is stimulated by cytochrome b5, which acts as an allosteric effector increasing the Vmax of the lyase activity. A cytochrome P450 monooxygenase involved in corticoid and androgen biosynthesis. Catalyzes 17-alpha hydroxylation of C21 steroids, which is common for both pathways. A second oxidative step, required only for androgen synthesis, involves an acyl-carbon cleavage. The 17-alpha hydroxy intermediates, as part of adrenal glucocorticoids biosynthesis pathway, are precursors of cortisol. Hydroxylates steroid hormones, pregnenolone and progesterone to form 17-alpha hydroxy metabolites, followed by the cleavage of the C17-C20 bond to form C19 steroids, dehydroepiandrosterone (DHEA) and androstenedione. Has 16-alpha hydroxylase activity. Catalyzes 16-alpha hydroxylation of 17-alpha hydroxy pregnenolone, followed by the cleavage of the C17-C20 bond to form 16-alpha-hydroxy DHEA. Also 16-alpha hydroxylates androgens, relevant for estriol synthesis. Mechanistically, uses molecular oxygen inserting one oxygen atom into a substrate, and reducing the second into a water molecule, with two electrons provided by NADPH via cytochrome P450 reductase (CPR; NADPH-ferrihemoprotein reductase). In Capra hircus (Goat), this protein is Steroid 17-alpha-hydroxylase/17,20 lyase (CYP17A1).